A 157-amino-acid polypeptide reads, in one-letter code: Heat shock protein beta-9 (157 aa).

A compositionally biased stretch (low complexity) spans 1-17; that stretch reads MQRVGSSLPSGSQSASQ. Disordered stretches follow at residues 1-20 and 136-157; these read MQRV…QCPS and PPSE…KKLA. The 114-residue stretch at 35–148 folds into the sHSP domain; that stretch reads QRLTEDAAAV…EAQTGPASRF (114 aa). Basic residues predominate over residues 148–157; that stretch reads FRSRGSKKLA.

The protein belongs to the small heat shock protein (HSP20) family.

It is found in the cytoplasm. The protein localises to the nucleus. This is Heat shock protein beta-9 (HSPB9) from Bos taurus (Bovine).